The chain runs to 602 residues: Elongation factor 4 (602 aa).

The tr-type G domain maps to 6-188 (DRIRNFCIIA…RIVTRIPPPG (183 aa)). GTP contacts are provided by residues 18–23 (DHGKST) and 135–138 (NKID).

This sequence belongs to the TRAFAC class translation factor GTPase superfamily. Classic translation factor GTPase family. LepA subfamily.

It is found in the cell membrane. The enzyme catalyses GTP + H2O = GDP + phosphate + H(+). In terms of biological role, required for accurate and efficient protein synthesis under certain stress conditions. May act as a fidelity factor of the translation reaction, by catalyzing a one-codon backward translocation of tRNAs on improperly translocated ribosomes. Back-translocation proceeds from a post-translocation (POST) complex to a pre-translocation (PRE) complex, thus giving elongation factor G a second chance to translocate the tRNAs correctly. Binds to ribosomes in a GTP-dependent manner. This Pelotomaculum thermopropionicum (strain DSM 13744 / JCM 10971 / SI) protein is Elongation factor 4.